Here is a 152-residue protein sequence, read N- to C-terminus: Ribonuclease pancreatic beta-type (152 aa).

The N-terminal stretch at 1-25 (MGLEKSFILFSLLVLVLGWVQPSLG) is a signal peptide. Residues 31–45 (SSADKFKRQHMDPES) show a composition bias toward basic and acidic residues. Residues 31–53 (SSADKFKRQHMDPESPSKSSPTY) are disordered. 2 residues coordinate substrate: lysine 35 and arginine 38. The active-site Proton acceptor is the histidine 40. Intrachain disulfides connect cysteine 54–cysteine 112, cysteine 68–cysteine 123, cysteine 86–cysteine 138, and cysteine 93–cysteine 100. Residues 69 to 73 (KPVNT), lysine 94, and arginine 113 each bind substrate. Histidine 147 functions as the Proton donor in the catalytic mechanism.

This sequence belongs to the pancreatic ribonuclease family. Monomer.

The protein resides in the secreted. It carries out the reaction an [RNA] containing cytidine + H2O = an [RNA]-3'-cytidine-3'-phosphate + a 5'-hydroxy-ribonucleotide-3'-[RNA].. It catalyses the reaction an [RNA] containing uridine + H2O = an [RNA]-3'-uridine-3'-phosphate + a 5'-hydroxy-ribonucleotide-3'-[RNA].. In terms of biological role, endonuclease that catalyzes the cleavage of RNA on the 3' side of pyrimidine nucleotides. Acts on single-stranded and double-stranded RNA. The sequence is that of Ribonuclease pancreatic beta-type from Rattus exulans (Polynesian rat).